The following is a 294-amino-acid chain: Bifunctional protein FolD (294 aa).

Residues Gly169–Gly171, Thr196, and Val237 contribute to the NADP(+) site.

This sequence belongs to the tetrahydrofolate dehydrogenase/cyclohydrolase family. As to quaternary structure, homodimer.

It catalyses the reaction (6R)-5,10-methylene-5,6,7,8-tetrahydrofolate + NADP(+) = (6R)-5,10-methenyltetrahydrofolate + NADPH. The enzyme catalyses (6R)-5,10-methenyltetrahydrofolate + H2O = (6R)-10-formyltetrahydrofolate + H(+). It functions in the pathway one-carbon metabolism; tetrahydrofolate interconversion. Functionally, catalyzes the oxidation of 5,10-methylenetetrahydrofolate to 5,10-methenyltetrahydrofolate and then the hydrolysis of 5,10-methenyltetrahydrofolate to 10-formyltetrahydrofolate. This is Bifunctional protein FolD from Renibacterium salmoninarum (strain ATCC 33209 / DSM 20767 / JCM 11484 / NBRC 15589 / NCIMB 2235).